Reading from the N-terminus, the 36-residue chain is Amanexitide proprotein 2 (36 aa).

A propeptide spanning residues 1–10 is cleaved from the precursor; it reads MSDINATRLP. A cross-link (cyclopeptide (Val-Pro)) is located at residues 11–19; it reads VFSLPVFFP. A propeptide spanning residues 20–36 is cleaved from the precursor; the sequence is FVSDDIQAVLTRGESLC.

Belongs to the MSDIN fungal toxin family. In terms of processing, processed by the macrocyclase-peptidase enzyme POPB to yield a toxic cyclic nonapeptide. POPB first removes 10 residues from the N-terminus. Conformational trapping of the remaining peptide forces the enzyme to release this intermediate rather than proceed to macrocyclization. The enzyme rebinds the remaining peptide in a different conformation and catalyzes macrocyclization of the N-terminal 9 residues. In terms of tissue distribution, expressed in basidiocarps.

Its function is as follows. Cyclic nonapeptide that belongs to the MSDIN-like toxin family responsible for a large number of food poisoning cases and deaths. The sequence is that of Amanexitide proprotein 2 from Amanita exitialis (Guangzhou destroying angel).